Consider the following 478-residue polypeptide: MESKALLLVALSVWLQSLIVSREGLATADRISGGRDFTDIESKFALRTPEDTVEDTCHLIPGVTESVANCHFNHSSKTFVVIHGWTVTGMYESWVPKLVAALYKREPDSNVIVVDWLSRAQQHYPISAGYTKLVGQDVATFIDWMAVEFSYPPNNVHLLGYSLGAHAAGIAGSLTKKKVNRITGLDPAGPNFEYAEAPSRLSPDDADFVDVLHTFTRGSPGRSIGIQKPVGHVDIYPNGGTFQPGCNIGEAIRVIAERGLGDVDQLVKCSHERSIHLFIDSLLNEENPSKAYRCNSKEAFEKGLCLSCRKNRCNNLGYEINKVRAKRSSKMYLKTRAQMPYKVFHYQVKMRFSGTESDTHTNQAFEISLYGTVAESENIPFTLPEVSTNKTYSFLIYTEVDIGELLMLKLKWVSDSYFSWSNWWSSPGFAIEKIRVKAGETQKKVIFCSREKKSHLQKGKSSVVFVKCHDKSLNRKSG.

A signal peptide spans 1–27; sequence MESKALLLVALSVWLQSLIVSREGLAT. The interaction with GPIHBP1 stretch occupies residues 35-56; the sequence is RDFTDIESKFALRTPEDTVEDT. Cys-57 and Cys-70 are joined by a disulfide. Asn-73 is a glycosylation site (N-linked (GlcNAc...) asparagine). Tyr-124 is modified (3'-nitrotyrosine). The Nucleophile role is filled by Ser-162. The Charge relay system role is filled by Asp-186. Tyr-194 is subject to 3'-nitrotyrosine. Positions 197, 200, 202, and 205 each coordinate Ca(2+). Residues Cys-246 and Cys-269 are joined by a disulfide bond. The segment at 246-269 is essential for determining substrate specificity; sequence CNIGEAIRVIAERGLGDVDQLVKC. His-271 serves as the catalytic Charge relay system. 2 cysteine pairs are disulfide-bonded: Cys-294–Cys-313 and Cys-305–Cys-308. The PLAT domain maps to 344–467; it reads FHYQVKMRFS…KGKSSVVFVK (124 aa). At Tyr-346 the chain carries 3'-nitrotyrosine. Asn-389 is a glycosylation site (N-linked (GlcNAc...) asparagine). The segment at 420–424 is important for interaction with lipoprotein particles; the sequence is WSNWW. Residues 433-437 form an important for heparin binding region; it reads KIRVK. Positions 446–470 are interaction with GPIHBP1; sequence IFCSREKKSHLQKGKSSVVFVKCHD. Residues Cys-448 and Cys-468 are joined by a disulfide bond.

Belongs to the AB hydrolase superfamily. Lipase family. As to quaternary structure, homodimer. Interacts with GPIHBP1 with 1:1 stoichiometry. Interacts with APOC2; the interaction activates LPL activity in the presence of lipids. Interaction with heparan sulfate proteoglycans is required to protect LPL against loss of activity. Associates with lipoprotein particles in blood plasma. Interacts with LMF1 and SEL1L; interaction with SEL1L is required to prevent aggregation of newly synthesized LPL in the endoplasmic reticulum (ER), and for normal export of LPL from the ER to the extracellular space. Interacts with SORL1; SORL1 acts as a sorting receptor, promoting LPL localization to endosomes and later to lysosomes, leading to degradation of newly synthesized LPL. Tyrosine nitration after lipopolysaccharide (LPS) challenge down-regulates the lipase activity.

It localises to the cell membrane. It is found in the secreted. The protein resides in the extracellular space. The protein localises to the extracellular matrix. It catalyses the reaction a triacylglycerol + H2O = a diacylglycerol + a fatty acid + H(+). The enzyme catalyses a 1,2-diacyl-sn-glycero-3-phosphocholine + H2O = a 2-acyl-sn-glycero-3-phosphocholine + a fatty acid + H(+). The catalysed reaction is 1,2,3-tri-(9Z-octadecenoyl)-glycerol + H2O = di-(9Z)-octadecenoylglycerol + (9Z)-octadecenoate + H(+). It carries out the reaction 1,2-di-(9Z-octadecenoyl)-sn-glycero-3-phosphocholine + H2O = (9Z-octadecenoyl)-sn-glycero-3-phosphocholine + (9Z)-octadecenoate + H(+). It catalyses the reaction 1,2,3-tributanoylglycerol + H2O = dibutanoylglycerol + butanoate + H(+). The enzyme catalyses 1,2-dihexadecanoyl-sn-glycero-3-phosphocholine + H2O = hexadecanoyl-sn-glycero-3-phosphocholine + hexadecanoate + H(+). The apolipoprotein APOC2 acts as a coactivator of LPL activity. Ca(2+) binding promotes protein stability and formation of the active homodimer. Interaction with GPIHBP1 protects LPL against inactivation by ANGPTL4. Functionally, key enzyme in triglyceride metabolism. Catalyzes the hydrolysis of triglycerides from circulating chylomicrons and very low density lipoproteins (VLDL), and thereby plays an important role in lipid clearance from the blood stream, lipid utilization and storage. Although it has both phospholipase and triglyceride lipase activities it is primarily a triglyceride lipase with low but detectable phospholipase activity. Mediates margination of triglyceride-rich lipoprotein particles in capillaries. Recruited to its site of action on the luminal surface of vascular endothelium by binding to GPIHBP1 and cell surface heparan sulfate proteoglycans. This chain is Lipoprotein lipase (LPL), found in Sus scrofa (Pig).